A 262-amino-acid chain; its full sequence is Octopine permease ATP-binding protein P (262 aa).

One can recognise an ABC transporter domain in the interval 9-254; sequence VKLTGIRKNF…PRTERFRQFL (246 aa). Position 41 to 48 (41 to 48) interacts with ATP; the sequence is GSSGSGKS.

This sequence belongs to the ABC transporter superfamily.

The protein localises to the cell inner membrane. Its function is as follows. Component of the octopine active transport system probably consisting of four subunits: Q, M, P and T. The protein is Octopine permease ATP-binding protein P (occP) of Rhizobium meliloti (Ensifer meliloti).